A 596-amino-acid chain; its full sequence is Fumarate reductase (cytochrome) (596 aa).

An N-terminal signal peptide occupies residues 1–25; sequence MKKMNLAVCIATLMGTAGLMGTAVA. Positions 33, 39, 42, 43, 61, 64, 65, 83, 86, 93, 96, 97, 99, 100, 107, 110, and 111 each coordinate heme c. A flavoprotein-like region spans residues 143–596; that stretch reads ALASAPHDTV…EEAAKYSKKN (454 aa). Positions 162, 181, 189, 194, 195, 196, 303, and 369 each coordinate FAD. Glycine 195 is a binding site for fumarate. Succinate is bound at residue glycine 195. Residue tyrosine 386 participates in heme c binding. The succinate site is built by histidine 390, threonine 402, and glutamate 403. 2 residues coordinate fumarate: threonine 402 and glutamate 403. Arginine 427 acts as the Proton donor in catalysis. Histidine 529 is a binding site for fumarate. Histidine 529 contributes to the succinate binding site. Histidine 530 and glutamate 559 together coordinate FAD. Fumarate-binding residues include arginine 569 and glycine 572. Residues arginine 569 and glycine 572 each contribute to the succinate site. Residues alanine 574 and isoleucine 575 each coordinate FAD.

In the C-terminal section; belongs to the FAD-dependent oxidoreductase 2 family. FRD/SDH subfamily. As to quaternary structure, monomer. The cofactor is FAD. Requires heme c as cofactor.

The protein resides in the periplasm. It catalyses the reaction 2 Fe(III)-[cytochrome c] + succinate = fumarate + 2 Fe(II)-[cytochrome c] + 2 H(+). Its activity is regulated as follows. Mesaconic acid is a competitive inhibitor of fumarate reduction. Functionally, flavocytochrome that catalyzes the reduction of fumarate to succinate. Is essential for fumarate respiration during anaerobic growth, acting as the terminal reductase. Receives electrons from the membrane-bound tetraheme c-type cytochrome CymA. Is essentially unidirectional, catalyzing only fumarate reduction. Cannot reduce nitrite, dimethylsulphoxide, trimethylamine-N-oxide (TMAO) or sulfite. In vitro, can use the artificial electron donor methyl viologen. The protein is Fumarate reductase (cytochrome) of Shewanella frigidimarina (strain NCIMB 400).